The primary structure comprises 208 residues: Guanylate kinase (208 aa).

A Guanylate kinase-like domain is found at 5–184 (GLLIVFSGPS…AAERVKCVIE (180 aa)). 12 to 19 (GPSGVGKG) lines the ATP pocket.

It belongs to the guanylate kinase family.

The protein resides in the cytoplasm. The catalysed reaction is GMP + ATP = GDP + ADP. Functionally, essential for recycling GMP and indirectly, cGMP. The sequence is that of Guanylate kinase from Streptococcus pneumoniae (strain ATCC BAA-255 / R6).